We begin with the raw amino-acid sequence, 145 residues long: Basic phospholipase A2 Vb-2 (145 aa).

The first 19 residues, M1–A19, serve as a signal peptide directing secretion. A propeptide spanning residues A20–L27 is cleaved from the precursor. 7 disulfide bridges follow: C38–C97, C52–C144, C54–C70, C69–C125, C76–C118, C86–C111, and C104–C116. Residues Y53, G55, and G57 each contribute to the Ca(2+) site. Residue H73 is part of the active site. Residue D74 participates in Ca(2+) binding. The active site involves D119.

Requires Ca(2+) as cofactor. Expressed by the venom gland.

The protein localises to the secreted. It carries out the reaction a 1,2-diacyl-sn-glycero-3-phosphocholine + H2O = a 1-acyl-sn-glycero-3-phosphocholine + a fatty acid + H(+). Its function is as follows. Snake venom phospholipase A2 (PLA2) that has only a weak enzymatic activity. Inhibits neuromuscular transmission by blocking acetylcholine release from the nerve termini. PLA2 catalyzes the calcium-dependent hydrolysis of the 2-acyl groups in 3-sn-phosphoglycerides. The protein is Basic phospholipase A2 Vb-2 of Bungarus fasciatus (Banded krait).